The sequence spans 710 residues: Cleavage and polyadenylation factor complex subunit C74.02c (710 aa).

The span at 1–30 (MDNWNSVRNVSSDRQTSKTSENPPHTSNEY) shows a compositional bias: polar residues. 3 disordered regions span residues 1 to 42 (MDNW…LSPD), 85 to 170 (ASSN…SDVN), and 361 to 510 (GPAM…SVSW). Residues 86 to 108 (SSNPSLISSGSSQTGSPSQSLSS) show a composition bias toward low complexity. The segment covering 109–170 (NKEPSSPGIS…EVPSSKSDVN (62 aa)) has biased composition (polar residues). Composition is skewed to low complexity over residues 361–383 (GPAMAPSASNKPSASSTTKSSNS) and 401–420 (LASSTKPTSASSSTKAPLTK). Positions 421-430 (QQTNPSTPLS) are enriched in polar residues. Basic and acidic residues predominate over residues 437–447 (KGREKEKDKDS).

As to quaternary structure, component of the cleavage and polyadenylation factor (CPF) complex.

It is found in the cytoplasm. The protein localises to the nucleus. In terms of biological role, RNA-binding component of the cleavage and polyadenylation factor (CPF) complex, which plays a key role in polyadenylation-dependent pre-mRNA 3'-end formation. Involved in poly(A) site recognition. May be involved in coupling transcription termination and mRNA 3'-end formation. This is Cleavage and polyadenylation factor complex subunit C74.02c from Schizosaccharomyces pombe (strain 972 / ATCC 24843) (Fission yeast).